The following is a 44-amino-acid chain: Photosystem I reaction center subunit IX (44 aa).

The helical transmembrane segment at 9–29 (FVRSAPVVAAIWLSLTAGIII) threads the bilayer.

The protein belongs to the PsaJ family.

The protein resides in the cellular thylakoid membrane. May help in the organization of the PsaE and PsaF subunits. This Prochlorococcus marinus (strain MIT 9301) protein is Photosystem I reaction center subunit IX.